We begin with the raw amino-acid sequence, 447 residues long: Ribosomal protein uS12 methylthiotransferase RimO (447 aa).

An MTTase N-terminal domain is found at 6–122 (EKVSMVSLGC…IAEIIEEKSS (117 aa)). Cys-15, Cys-51, Cys-85, Cys-160, Cys-164, and Cys-167 together coordinate [4Fe-4S] cluster. A Radical SAM core domain is found at 146-376 (SSPAYTAYLK…MKAQARVSFK (231 aa)). One can recognise a TRAM domain in the interval 379–447 (RRLIDTEEQV…DYDLIGEIIS (69 aa)).

Belongs to the methylthiotransferase family. RimO subfamily. The cofactor is [4Fe-4S] cluster.

It localises to the cytoplasm. It catalyses the reaction L-aspartate(89)-[ribosomal protein uS12]-hydrogen + (sulfur carrier)-SH + AH2 + 2 S-adenosyl-L-methionine = 3-methylsulfanyl-L-aspartate(89)-[ribosomal protein uS12]-hydrogen + (sulfur carrier)-H + 5'-deoxyadenosine + L-methionine + A + S-adenosyl-L-homocysteine + 2 H(+). In terms of biological role, catalyzes the methylthiolation of an aspartic acid residue of ribosomal protein uS12. In Geobacter sulfurreducens (strain ATCC 51573 / DSM 12127 / PCA), this protein is Ribosomal protein uS12 methylthiotransferase RimO.